Reading from the N-terminus, the 538-residue chain is Phosphatidylethanolamine transferase Mcr-2 (538 aa).

Helical transmembrane passes span 14 to 34, 47 to 67, 72 to 92, 121 to 141, and 161 to 181; these read PFVL…LTFF, LGFI…IVVL, YVLK…SYFT, LAFF…VAVA, and VSLV…ASFF. Residues Glu-244 and Thr-283 each contribute to the Zn(2+) site. Disulfide bonds link Cys-279–Cys-289, Cys-354–Cys-362, and Cys-412–Cys-420. Phosphothreonine is present on Thr-283. Zn(2+) is bound by residues Asp-463 and His-464.

It belongs to the phosphoethanolamine transferase family. As to quaternary structure, monomer. Post-translationally, phosphorylated at Thr-283; may represent an intermediate in the catalytic mechanism.

It localises to the cell inner membrane. It carries out the reaction lipid A (E. coli) + a 1,2-diacyl-sn-glycero-3-phosphoethanolamine + H(+) = lipid A 4'-(2-aminoethyl diphosphate) (E. coli) + a 1,2-diacyl-sn-glycerol. In terms of biological role, probably catalyzes the addition of a phosphoethanolamine moiety to lipid A. Phosphoethanolamine modification of lipid A confers polymyxin resistance. Confers resistance to polymyxin-type antibiotics such as colistin. The protein is Phosphatidylethanolamine transferase Mcr-2 of Escherichia coli.